The primary structure comprises 658 residues: Glycogen debranching enzyme (658 aa).

Asp336 acts as the Nucleophile in catalysis. Glu371 serves as the catalytic Proton donor. The segment at 459 to 484 (EANGEENRDGTNSNYSDNHGKEGLGG) is disordered.

The protein belongs to the glycosyl hydrolase 13 family.

It carries out the reaction Hydrolysis of (1-&gt;6)-alpha-D-glucosidic linkages to branches with degrees of polymerization of three or four glucose residues in limit dextrin.. Its pathway is glycan degradation; glycogen degradation. In terms of biological role, removes maltotriose and maltotetraose chains that are attached by 1,6-alpha-linkage to the limit dextrin main chain, generating a debranched limit dextrin. The sequence is that of Glycogen debranching enzyme from Salmonella paratyphi B (strain ATCC BAA-1250 / SPB7).